A 160-amino-acid polypeptide reads, in one-letter code: Phosphopantetheine adenylyltransferase (160 aa).

Substrate is bound at residue Thr10. ATP contacts are provided by residues 10-11 (TF) and His18. Residues Lys42, Leu74, and Arg88 each coordinate substrate. ATP contacts are provided by residues 89-91 (GLR), Glu99, and 124-130 (NSFISST).

It belongs to the bacterial CoaD family. As to quaternary structure, homohexamer. Requires Mg(2+) as cofactor.

It is found in the cytoplasm. It catalyses the reaction (R)-4'-phosphopantetheine + ATP + H(+) = 3'-dephospho-CoA + diphosphate. Its pathway is cofactor biosynthesis; coenzyme A biosynthesis; CoA from (R)-pantothenate: step 4/5. Its function is as follows. Reversibly transfers an adenylyl group from ATP to 4'-phosphopantetheine, yielding dephospho-CoA (dPCoA) and pyrophosphate. This Aeromonas salmonicida (strain A449) protein is Phosphopantetheine adenylyltransferase.